The chain runs to 238 residues: Probable transglycosylase SceD 3 (238 aa).

Residues 1–27 (MKKTVVASTLAVGLGVTGFAAGNSADA) form the signal peptide. A disordered region spans residues 82 to 161 (YGQGSTNAPA…SEASEGSSVN (80 aa)). Over residues 89 to 156 (APAQETAEQP…NESSSSEASE (68 aa)) the composition is skewed to low complexity.

This sequence belongs to the transglycosylase family. SceD subfamily.

The protein resides in the secreted. Is able to cleave peptidoglycan and affects clumping and separation of bacterial cells. The chain is Probable transglycosylase SceD 3 (sceD3) from Staphylococcus saprophyticus subsp. saprophyticus (strain ATCC 15305 / DSM 20229 / NCIMB 8711 / NCTC 7292 / S-41).